A 597-amino-acid chain; its full sequence is MMDLELPPPGLQSQQDMDLIDILWRQDIDLGVSREVFDFSQRQKDYELEKQKKLEKERQEQLQKEQEKAFFAQFQLDEETGEFLPIQPAQHIQTDTSGSASYSQVAHIPKQDALYFEDCMQLLAETFPFVDDHESLALDIPSHAESSVFTAPHQAQSLNSSLEAAMTDLSSIEQDMEQVWQELFSIPELQCLNTENKQLADTTAVPSPEATLTEMDSNYHFYSSISSLEKEVGNCGPHFLHGFEDSFSSILSTDDASQLTSLDSNPTLNTDFGDEFYSAFIAEPSDGGSMPSSAAISQSLSELLDGTIEGCDLSLCKAFNPKHAEGTMEFNDSDSGISLNTSPSRASPEHSVESSIYGDPPPGFSDSEMEELDSAPGSVKQNGPKAQPAHSPGDTVQPLSPAQGHSAPMRESQCENTTKKEVPVSPGHQKAPFTKDKHSSRLEAHLTRDELRAKALHIPFPVEKIINLPVDDFNEMMSKEQFNEAQLALIRDIRRRGKNKVAAQNCRKRKLENIVELEQDLGHLKDEREKLLREKGENDRNLHLLKRRLSTLYLEVFSMLRDEDGKPYSPSEYSLQQTRDGNVFLVPKSKKPDTKKN.

Positions 29 to 31 match the DLG motif motif; sequence DLG. At Ser40 the chain carries Phosphoserine; by PKC. Positions 79–82 match the ETGE motif motif; the sequence is ETGE. A Phosphoserine modification is found at Ser207. The tract at residues 327-440 is disordered; that stretch reads TMEFNDSDSG…APFTKDKHSS (114 aa). Residues 333–345 are compositionally biased toward polar residues; the sequence is SDSGISLNTSPSR. N-linked (Glc) (glycation) lysine glycosylation is found at Lys454, Lys464, and Lys479. A bZIP domain is found at 489–552; it reads LIRDIRRRGK…HLLKRRLSTL (64 aa). Residue Arg491 is glycosylated (N-linked (Glc) (glycation) arginine). A basic motif region spans residues 491-510; sequence RDIRRRGKNKVAAQNCRKRK. The tract at residues 514–521 is leucine-zipper; sequence IVELEQDL. Residue Arg561 is glycosylated (N-linked (Glc) (glycation) arginine). The segment at 563–597 is disordered; that stretch reads EDGKPYSPSEYSLQQTRDGNVFLVPKSKKPDTKKN. N-linked (Glc) (glycation) lysine glycosylation occurs at Lys566. Over residues 571 to 580 the composition is skewed to polar residues; the sequence is SEYSLQQTRD. Positions 583–588 are mediates interaction with CHD6 and is necessary to activate transcription; the sequence is VFLVPK. Residues Lys588 and Lys591 each carry the N6-acetyllysine; by CREBBP modification.

The protein belongs to the bZIP family. CNC subfamily. Heterodimer; heterodimerizes with small Maf proteins. Interacts (via the bZIP domain) with MAFG and MAFK; required for binding to antioxidant response elements (AREs) on DNA. Interacts with KEAP1; the interaction is direct and promotes ubiquitination by the BCR(KEAP1) E3 ubiquitin ligase complex. Forms a ternary complex with PGAM5 and KEAP1. Interacts with EEF1D at heat shock promoter elements (HSE). Interacts via its leucine-zipper domain with the coiled-coil domain of PMF1. Interacts with CHD6; involved in activation of the transcription. Interacts with ESRRB; represses NFE2L2 transcriptional activity. Interacts with MOTS-c, a peptide produced by the mitochondrially encoded 12S rRNA MT-RNR1; the interaction occurs in the nucleus following metabolic stress. In terms of processing, ubiquitinated in the cytoplasm by the BCR(KEAP1) E3 ubiquitin ligase complex leading to its degradation. In response to oxidative stress, electrophile metabolites, such as sulforaphane, modify KEAP1, leading to inhibit activity of the BCR(KEAP1) complex, promoting NFE2L2/NRF2 nuclear accumulation and activity. In response to autophagy, the BCR(KEAP1) complex is inactivated. Phosphorylated by EIF2AK3/PERK following unfolded protein response (UPR), promoting dissociation from its cytoplasmic inhibitor KEAP1, followed by its translocation into the nucleus. Phosphorylation of Ser-40 by PKC in response to oxidative stress dissociates NFE2L2 from its cytoplasmic inhibitor KEAP1, promoting its translocation into the nucleus. Post-translationally, acetylation at Lys-588 and Lys-591 increases nuclear localization whereas deacetylation by SIRT1 enhances cytoplasmic presence. In terms of processing, glycation impairs transcription factor activity by preventing heterodimerization with small Maf proteins. Deglycation by FN3K restores activity. As to expression, widely expressed. Highest expression in liver, skeletal muscle, luminal cells of the stomach and intestine, lining of the bronchi and alveoli, and in renal tubules; followed by heart, spleen, testis and brain.

The protein resides in the cytoplasm. The protein localises to the cytosol. It is found in the nucleus. In terms of biological role, transcription factor that plays a key role in the response to oxidative stress: binds to antioxidant response (ARE) elements present in the promoter region of many cytoprotective genes, such as phase 2 detoxifying enzymes, and promotes their expression, thereby neutralizing reactive electrophiles. In normal conditions, ubiquitinated and degraded in the cytoplasm by the BCR(KEAP1) complex. In response to oxidative stress, electrophile metabolites inhibit activity of the BCR(KEAP1) complex, promoting nuclear accumulation of NFE2L2/NRF2, heterodimerization with one of the small Maf proteins and binding to ARE elements of cytoprotective target genes. The NFE2L2/NRF2 pathway is also activated in response to selective autophagy: autophagy promotes interaction between KEAP1 and SQSTM1/p62 and subsequent inactivation of the BCR(KEAP1) complex, leading to NFE2L2/NRF2 nuclear accumulation and expression of cytoprotective genes. The NFE2L2/NRF2 pathway is also activated during the unfolded protein response (UPR), contributing to redox homeostasis and cell survival following endoplasmic reticulum stress. May also be involved in the transcriptional activation of genes of the beta-globin cluster by mediating enhancer activity of hypersensitive site 2 of the beta-globin locus control region. Also plays an important role in the regulation of the innate immune response. It is a critical regulator of the innate immune response and survival during sepsis by maintaining redox homeostasis and restraint of the dysregulation of pro-inflammatory signaling pathways like MyD88-dependent and -independent and TNF-alpha signaling. Suppresses macrophage inflammatory response by blocking pro-inflammatory cytokine transcription and the induction of IL6. Binds to the proximity of pro-inflammatory genes in macrophages and inhibits RNA Pol II recruitment. The inhibition is independent of the Nrf2-binding motif and reactive oxygen species level. Represses antiviral cytosolic DNA sensing by suppressing the expression of the adapter protein STING1 and decreasing responsiveness to STING1 agonists while increasing susceptibility to infection with DNA viruses. This Mus musculus (Mouse) protein is Nuclear factor erythroid 2-related factor 2.